We begin with the raw amino-acid sequence, 134 residues long: Small ribosomal subunit protein uS9 (134 aa).

Positions 114-134 (QKESKNFGGPGARAKYQKSYR) are disordered.

Belongs to the universal ribosomal protein uS9 family.

The chain is Small ribosomal subunit protein uS9 from Methanosarcina acetivorans (strain ATCC 35395 / DSM 2834 / JCM 12185 / C2A).